The primary structure comprises 317 residues: Sulfate adenylyltransferase subunit 2 (317 aa).

Disordered stretches follow at residues Met1 to Asp21 and Arg298 to Phe317.

The protein belongs to the PAPS reductase family. CysD subfamily. In terms of assembly, heterodimer composed of CysD, the smaller subunit, and CysN.

It carries out the reaction sulfate + ATP + H(+) = adenosine 5'-phosphosulfate + diphosphate. Its pathway is sulfur metabolism; hydrogen sulfide biosynthesis; sulfite from sulfate: step 1/3. Functionally, with CysN forms the ATP sulfurylase (ATPS) that catalyzes the adenylation of sulfate producing adenosine 5'-phosphosulfate (APS) and diphosphate, the first enzymatic step in sulfur assimilation pathway. APS synthesis involves the formation of a high-energy phosphoric-sulfuric acid anhydride bond driven by GTP hydrolysis by CysN coupled to ATP hydrolysis by CysD. In Rhizobium etli (strain ATCC 51251 / DSM 11541 / JCM 21823 / NBRC 15573 / CFN 42), this protein is Sulfate adenylyltransferase subunit 2.